The following is a 417-amino-acid chain: Serine hydroxymethyltransferase (417 aa).

(6S)-5,6,7,8-tetrahydrofolate contacts are provided by residues leucine 121 and 125 to 127 (GHL). N6-(pyridoxal phosphate)lysine is present on lysine 229. Residue 355–357 (SPF) participates in (6S)-5,6,7,8-tetrahydrofolate binding.

It belongs to the SHMT family. Homodimer. The cofactor is pyridoxal 5'-phosphate.

The protein resides in the cytoplasm. It catalyses the reaction (6R)-5,10-methylene-5,6,7,8-tetrahydrofolate + glycine + H2O = (6S)-5,6,7,8-tetrahydrofolate + L-serine. The protein operates within one-carbon metabolism; tetrahydrofolate interconversion. It functions in the pathway amino-acid biosynthesis; glycine biosynthesis; glycine from L-serine: step 1/1. Catalyzes the reversible interconversion of serine and glycine with tetrahydrofolate (THF) serving as the one-carbon carrier. This reaction serves as the major source of one-carbon groups required for the biosynthesis of purines, thymidylate, methionine, and other important biomolecules. Also exhibits THF-independent aldolase activity toward beta-hydroxyamino acids, producing glycine and aldehydes, via a retro-aldol mechanism. In Shewanella denitrificans (strain OS217 / ATCC BAA-1090 / DSM 15013), this protein is Serine hydroxymethyltransferase.